We begin with the raw amino-acid sequence, 283 residues long: Protein canopy homolog 3 (283 aa).

The first 35 residues, 1–35, serve as a signal peptide directing secretion; the sequence is MEPLPEPTSRPRLRPRPRCLLLLPLLLLLLLLLPA. In terms of domain architecture, Saposin B-type spans 55 to 276; it reads SKCEVCKYVA…EGIQKASPLT (222 aa). A glycan (N-linked (GlcNAc...) asparagine) is linked at Asn-161. Residues 161 to 187 adopt a coiled-coil conformation; it reads NETSAEVADLKKQCDVLVEEFEEVIED. A disordered region spans residues 223-283; it reads KGDTAALGGK…PLTHSPPDEL (61 aa).

It belongs to the canopy family. In terms of assembly, interacts with HSP90B1; this interaction is disrupted in the presence of ATP. Interacts with TLR1, TLR2, TLR4 and TLR9.

It is found in the endoplasmic reticulum. In terms of biological role, toll-like receptor (TLR)-specific co-chaperone for HSP90B1. Required for proper TLR folding, except that of TLR3, and hence controls TLR exit from the endoplasmic reticulum. Consequently, required for both innate and adaptive immune responses. In Sus scrofa (Pig), this protein is Protein canopy homolog 3 (CNPY3).